We begin with the raw amino-acid sequence, 915 residues long: MASSSSSLAFSLSLLLALILCFSPTQSYKTIGKGYRLVSIEESPDGGFIGYLQVKQKNKIYGSDITTLRLFVKHETDSRLRVHITDAKQQRWEVPYNLLPREQPPQVGKVIGKSRKSPITVQEISGSELIFSYTTDPFTFAVKRRSNHETLFNTTSSLVFKDQYLEISTSLPKEASLYGLGENSQANGIKLVPNEPYTLYTEDVSAINLNTDLYGSHPMYMDLRNVGGKAYAHAVLLLNSNGMDVFYRGDSLTYKVIGGVFDFYFIAGPSPLNVVDQYTQLIGRPAPMPYWSLGFHQCRWGYHNLSVVEDVVDNYKKAKIPLDVIWNDDDHMDGHKDFTLNPVAYPRAKLLAFLDKIHKIGMKYIVINDPGIGVNASYGTFQRAMAADVFIKYEGKPFLAQVWPGPVYFPDFLNPKTVSWWGDEIKRFHDLVPIDGLWIDMNEVSNFCSGLCTIPEGKQCPSGEGPGWVCCLDCKNITKTRWDDPPYKINATGVVAPVGFKTIATSATHYNGVREYDAHSIYGFSETIATHKGLLNVQGKRPFILSRSTFVGSGQYAAHWTGDNQGTWQSLQVSISTMLNFGIFGVPMVGSDICGFYPQPTEELCNRWIEVGAFYPFSRDHANYYSPRQELYQWDTVADSARNALGMRYKILPFLYTLNYEAHMTGAPIARPLFFSFPEYTECYGNSRQFLLGSSFMISPVLEQGKTEVEALFPPGSWYHMFDMTQAVVSKNGKRVTLPAPLNFVNVHLYQNTILPTQQGGLISKDARTTPFSLVIAFPAGASEGYATGKLYLDEDELPEMKLGNGQSTYVDFYASVGNGTMKMWSQVKEGKFALSKGWVIEKVSVLGLRGAGQVSEIQINGSPMTKKIEVSSKEHTYVIGLEDEEENKSVMVEVRGLEMLVGKDFNMSWKMGIN.

The N-terminal stretch at 1–27 (MASSSSSLAFSLSLLLALILCFSPTQS) is a signal peptide. 3 N-linked (GlcNAc...) asparagine glycosylation sites follow: asparagine 153, asparagine 304, and asparagine 375. Active-site residues include aspartate 440 and glutamate 443. 2 N-linked (GlcNAc...) asparagine glycosylation sites follow: asparagine 476 and asparagine 490. Catalysis depends on aspartate 563, which acts as the Proton donor. N-linked (GlcNAc...) asparagine glycans are attached at residues asparagine 819, asparagine 888, and asparagine 907.

This sequence belongs to the glycosyl hydrolase 31 family. Expressed in roots, stems, leaves, flowers and siliques. Expressed in cell types undergoing cell wall modifications, including trichomes, vasculature, stomata, and elongating anther filaments. Not detected in pollen.

Its subcellular location is the secreted. The protein resides in the cell wall. It localises to the extracellular space. It is found in the apoplast. It catalyses the reaction Hydrolysis of terminal, non-reducing alpha-D-xylose residues with release of alpha-D-xylose.. Glycoside hydrolase releasing xylosyl residues from xyloglucan oligosaccharides at the non-reducing end. Has alpha-xylosidase activity against xylan oligosaccharides. Also has alpha-glucosidase activity against p-nitrophenyl-alpha-D-glucopyranoside. No activity against p-nitrophenyl-D-xyloside. The chain is Alpha-xylosidase 1 from Arabidopsis thaliana (Mouse-ear cress).